The primary structure comprises 342 residues: Ribosomal RNA small subunit methyltransferase C (342 aa).

Belongs to the methyltransferase superfamily. RsmC family. In terms of assembly, monomer.

It is found in the cytoplasm. The catalysed reaction is guanosine(1207) in 16S rRNA + S-adenosyl-L-methionine = N(2)-methylguanosine(1207) in 16S rRNA + S-adenosyl-L-homocysteine + H(+). In terms of biological role, specifically methylates the guanine in position 1207 of 16S rRNA in the 30S particle. The sequence is that of Ribosomal RNA small subunit methyltransferase C from Citrobacter koseri (strain ATCC BAA-895 / CDC 4225-83 / SGSC4696).